Consider the following 305-residue polypeptide: Small ribosomal subunit biogenesis GTPase RsgA (305 aa).

Residues 67–224 form the CP-type G domain; sequence SSELVRPAVA…VADTPGFSSF (158 aa). Residues 116 to 119 and 166 to 174 each bind GTP; these read NKID and GQSGVGKST. The Zn(2+) site is built by Cys248, Cys253, His255, and Cys261.

This sequence belongs to the TRAFAC class YlqF/YawG GTPase family. RsgA subfamily. As to quaternary structure, monomer. Associates with 30S ribosomal subunit, binds 16S rRNA. Zn(2+) serves as cofactor.

It is found in the cytoplasm. In terms of biological role, one of several proteins that assist in the late maturation steps of the functional core of the 30S ribosomal subunit. Helps release RbfA from mature subunits. May play a role in the assembly of ribosomal proteins into the subunit. Circularly permuted GTPase that catalyzes slow GTP hydrolysis, GTPase activity is stimulated by the 30S ribosomal subunit. This Ruminiclostridium cellulolyticum (strain ATCC 35319 / DSM 5812 / JCM 6584 / H10) (Clostridium cellulolyticum) protein is Small ribosomal subunit biogenesis GTPase RsgA.